Reading from the N-terminus, the 199-residue chain is Large ribosomal subunit protein uL4 (199 aa).

It belongs to the universal ribosomal protein uL4 family. In terms of assembly, part of the 50S ribosomal subunit.

Its function is as follows. One of the primary rRNA binding proteins, this protein initially binds near the 5'-end of the 23S rRNA. It is important during the early stages of 50S assembly. It makes multiple contacts with different domains of the 23S rRNA in the assembled 50S subunit and ribosome. Functionally, forms part of the polypeptide exit tunnel. This Aquifex aeolicus (strain VF5) protein is Large ribosomal subunit protein uL4.